Reading from the N-terminus, the 524-residue chain is Bifunctional purine biosynthesis protein PurH (524 aa).

An MGS-like domain is found at 1-145 (MIKQALLSVS…KNHRDVTVIV (145 aa)).

It belongs to the PurH family.

It catalyses the reaction (6R)-10-formyltetrahydrofolate + 5-amino-1-(5-phospho-beta-D-ribosyl)imidazole-4-carboxamide = 5-formamido-1-(5-phospho-D-ribosyl)imidazole-4-carboxamide + (6S)-5,6,7,8-tetrahydrofolate. The catalysed reaction is IMP + H2O = 5-formamido-1-(5-phospho-D-ribosyl)imidazole-4-carboxamide. It functions in the pathway purine metabolism; IMP biosynthesis via de novo pathway; 5-formamido-1-(5-phospho-D-ribosyl)imidazole-4-carboxamide from 5-amino-1-(5-phospho-D-ribosyl)imidazole-4-carboxamide (10-formyl THF route): step 1/1. It participates in purine metabolism; IMP biosynthesis via de novo pathway; IMP from 5-formamido-1-(5-phospho-D-ribosyl)imidazole-4-carboxamide: step 1/1. The sequence is that of Bifunctional purine biosynthesis protein PurH from Cupriavidus metallidurans (strain ATCC 43123 / DSM 2839 / NBRC 102507 / CH34) (Ralstonia metallidurans).